Reading from the N-terminus, the 229-residue chain is PKHD-type hydroxylase RPD_3334 (229 aa).

One can recognise a Fe2OG dioxygenase domain in the interval 78 to 180 (QIFPPLFNRY…RVASFFWLQS (103 aa)). Fe cation is bound by residues histidine 98, aspartate 100, and histidine 161. Arginine 171 serves as a coordination point for 2-oxoglutarate.

The cofactor is Fe(2+). Requires L-ascorbate as cofactor.

In Rhodopseudomonas palustris (strain BisB5), this protein is PKHD-type hydroxylase RPD_3334.